Here is a 458-residue protein sequence, read N- to C-terminus: Adenylosuccinate synthetase (458 aa).

GTP is bound by residues 17-23 and 45-47; these read GDEGKGK and GHT. Asp18 (proton acceptor) is an active-site residue. The Mg(2+) site is built by Asp18 and Gly45. Residues 18–21, 43–46, Thr137, Arg151, Gln247, Thr262, and Arg330 contribute to the IMP site; these read DEGK and NAGH. The Proton donor role is filled by His46. A substrate-binding site is contributed by 326-332; that stretch reads VTTGRSR. GTP contacts are provided by residues Arg332, 358-360, and 440-442; these read KLD and STS.

Belongs to the adenylosuccinate synthetase family. Homodimer. Mg(2+) serves as cofactor.

It is found in the cytoplasm. The enzyme catalyses IMP + L-aspartate + GTP = N(6)-(1,2-dicarboxyethyl)-AMP + GDP + phosphate + 2 H(+). It functions in the pathway purine metabolism; AMP biosynthesis via de novo pathway; AMP from IMP: step 1/2. In terms of biological role, plays an important role in the de novo pathway of purine nucleotide biosynthesis. Catalyzes the first committed step in the biosynthesis of AMP from IMP. This chain is Adenylosuccinate synthetase, found in Acidovorax sp. (strain JS42).